The primary structure comprises 459 residues: Acetyltransferase pigO (459 aa).

Belongs to the trichothecene O-acetyltransferase family.

Its pathway is secondary metabolite biosynthesis. Functionally, acetyltransferase; part of the gene cluster that mediates the biosynthesis of azaphilone pigments (MonAzPs), a complex mixture of compounds with a common azaphilone skeleton very widely used as food colorants. PigM and pigO are involved in the elimination of the omega-1 alcohol with pigM acting as an O-acetyltransferase that synthesizes the O-11 acetyl intermediate whereas pigO eliminates acetic acid to yield an intermediate with a C10(11) double bond. The first step of the pathway is performed by the nrPKS pigA that forms the hexaketide precursor from successive condensations of five malonyl-CoA units, with a simple acetyl-CoA starter unit. The role of esterase pigG is not clear, but it may play at most a supplementary role in the formation of the benzaldehyde produced by the pigA nrPKS. This very reactive benzaldehyde is intercepted by the pigC ketoreductase that to provide the first stable enzyme-free MonAzPs intermediate, 6-(4-hydroxy-2-oxopentyl)-3-methyl-2,4-dioxocyclohexane carbaldehyde, also known as M7PKS-1. The FAD-dependent monooxygenase pigN hydroxylates M7PKS-1 at C-4, which triggers the formation of the pyran ring. PigJ, pigK and pigD are involved in the acetylation of the pyran ring. PigJ and pigK form the two subunits of a dedicated fungal FAS that produces the side chain fatty acyl moiety of MonAzPs and pigD transfers the fatty acyl chain to the C-4 alcohol. PigM and pigO are involved in the elimination of the omega-1 alcohol. PigM acts as an O-acetyltransferase that synthesizes the putative O-11 acetyl intermediate whereas pigO eliminates acetic acid to yield an intermediate with a C10(11) double bond. The dehydration of the C-11 alcohol followed by the reduction of the C6(7) double bond by the NAD(P)H-dependent oxidoreductase pigE increases the electrophilicity of the C-5 ketone of the resulting acyl benzopyran. This in turn sets up the C-5 ketone for an intramolecular Knoevenagel aldol condensation with the C-20 enol of the side chain. This condensation affords the characteristic linear tricyclic carbon skeletons of the yellow pigments that serve as the common precursors for the classical yellow pigments monascin and ankaflavin, orange pigments rubopunctatin and monascorubrin, and red pigments ribropunctamine and monascorubramine. The FAD-dependent oxidoreductase pigF is especially invoved in the biosynthesis of orange and red pigments via desaturation of C6(7). This is Acetyltransferase pigO from Monascus ruber (Mold).